We begin with the raw amino-acid sequence, 141 residues long: MAKKITGFIKLQIPAGGANPAPPVGPALGQKGVNIMEFCKQFNAKTQSEAGMIIPVVITVFSDKSFTFVTKTPPAAVLLLKEAKLQKGSGEPNRNKVGTVTMEQVRKIAELKKPDLNSVDIEGAAQMVMGTARSMGIVVEG.

It belongs to the universal ribosomal protein uL11 family. As to quaternary structure, part of the ribosomal stalk of the 50S ribosomal subunit. Interacts with L10 and the large rRNA to form the base of the stalk. L10 forms an elongated spine to which L12 dimers bind in a sequential fashion forming a multimeric L10(L12)X complex. In terms of processing, one or more lysine residues are methylated.

Forms part of the ribosomal stalk which helps the ribosome interact with GTP-bound translation factors. This is Large ribosomal subunit protein uL11 from Chlorobaculum parvum (strain DSM 263 / NCIMB 8327) (Chlorobium vibrioforme subsp. thiosulfatophilum).